A 332-amino-acid polypeptide reads, in one-letter code: Serine, glycine, tyrosine and glutamine-rich protein (332 aa).

An N-terminal signal peptide occupies residues 1–17 (MMKTVLLLVVLVGVAYC). A disordered region spans residues 39 to 81 (SSSSSSSSSSGGGGSSGGGASGGGGGGGSSGGGGASGGGGGGS). Over residues 48 to 81 (SGGGGSSGGGASGGGGGGGSSGGGGASGGGGGGS) the composition is skewed to gly residues.

Prismatic layer of shell (at protein level). Expressed primarily in the mantle with highest level in the mantle edge and lower level in the mantle pallium.

It localises to the secreted. This chain is Serine, glycine, tyrosine and glutamine-rich protein, found in Margaritifera margaritifera (Freshwater pearl mussel).